A 368-amino-acid chain; its full sequence is UDP-N-acetylglucosamine--N-acetylmuramyl-(pentapeptide) pyrophosphoryl-undecaprenol N-acetylglucosamine transferase (368 aa).

Residues 10 to 12 (TGG), Asn126, Ser200, Ile255, and Gln300 contribute to the UDP-N-acetyl-alpha-D-glucosamine site.

It belongs to the glycosyltransferase 28 family. MurG subfamily.

It localises to the cell membrane. It carries out the reaction Mur2Ac(oyl-L-Ala-gamma-D-Glu-L-Lys-D-Ala-D-Ala)-di-trans,octa-cis-undecaprenyl diphosphate + UDP-N-acetyl-alpha-D-glucosamine = beta-D-GlcNAc-(1-&gt;4)-Mur2Ac(oyl-L-Ala-gamma-D-Glu-L-Lys-D-Ala-D-Ala)-di-trans,octa-cis-undecaprenyl diphosphate + UDP + H(+). It participates in cell wall biogenesis; peptidoglycan biosynthesis. In terms of biological role, cell wall formation. Catalyzes the transfer of a GlcNAc subunit on undecaprenyl-pyrophosphoryl-MurNAc-pentapeptide (lipid intermediate I) to form undecaprenyl-pyrophosphoryl-MurNAc-(pentapeptide)GlcNAc (lipid intermediate II). The protein is UDP-N-acetylglucosamine--N-acetylmuramyl-(pentapeptide) pyrophosphoryl-undecaprenol N-acetylglucosamine transferase of Lactobacillus acidophilus (strain ATCC 700396 / NCK56 / N2 / NCFM).